A 445-amino-acid polypeptide reads, in one-letter code: MLDNLKDAVRKFLGSSNYDKAVNDFIKELQISLIKSDVNVKLVSNLTQKIKDRLEKEKPPTAIERREWFISIVYDELSKLFGGDINPEVMPKKIPYVIMLVGVQGSGKTTTAGKLALFYKKKGYKVGLVAADVYRPAAYDQLVQIGKQINVPVYGEPNNTDAVGIAKRGVEKFLSEKYDIIIVDTAGRHGYGEEVKLLEEMKNMYSEIKPDEVILVIDASIGQKAYDLASRFHQASPIGSIIVTKMDGTAKGGGALSAVAATGAAIKFIGTGEKLDELEVFNPRRFVSRILGMGDIESIIEKIKGMEEYEQIQKKMEEVMSGKAKLTLRDIYKQLTALRKMGPLNKILQMLPGFGVFSQIPEEQLKLGEEKIKKFLVIMNSMTYKELDNPSIIDKSRIRRIAKGSGTSPEEVKELLKQYQVTNNLLKMVKRRKGLAKLFEDRNSK.

GTP-binding positions include 102–109 (GVQGSGKT), 184–188 (DTAGR), and 244–247 (TKMD).

The protein belongs to the GTP-binding SRP family. SRP54 subfamily. As to quaternary structure, part of the signal recognition particle protein translocation system, which is composed of SRP and FtsY. Archaeal SRP consists of a 7S RNA molecule of 300 nucleotides and two protein subunits: SRP54 and SRP19.

Its subcellular location is the cytoplasm. It catalyses the reaction GTP + H2O = GDP + phosphate + H(+). Involved in targeting and insertion of nascent membrane proteins into the cytoplasmic membrane. Binds to the hydrophobic signal sequence of the ribosome-nascent chain (RNC) as it emerges from the ribosomes. The SRP-RNC complex is then targeted to the cytoplasmic membrane where it interacts with the SRP receptor FtsY. The sequence is that of Signal recognition particle 54 kDa protein from Sulfurisphaera tokodaii (strain DSM 16993 / JCM 10545 / NBRC 100140 / 7) (Sulfolobus tokodaii).